A 418-amino-acid chain; its full sequence is MTVKDYMQQLGRQARAASRDMLAASTDDKNRALVAIADAITANRELIIQENARDLENGRANGLEPAMLDRLELTPARFDGMIEGLRQVAALPDPCGEISDLKYRPSGIQVGKMRVPLGVVGIIYESRPNVTIDAASLCLKSGNATILRGGSEAIHSNQAIAKCIAAGLESVGLPASAVQVVETTDRAAVGELITMAEYVDVIVPRGGRSLIERISNDAKVSVIKHLDGICHVFIDDDADLDKAFNIALNSKTHRYGVCNAMETLLVASSVAEKILPRLATAYAEKSVELRGCDRTLAILPNINAAKPEDWDTEYLAPILAIRVVDDMTAAMDHIAAHSSAHTESIVTENYTKARKFMALVDSASVMVNASTRFADGFQYGLGAEIGISTDKIHARGPVGLEGLTSQKWIVFGDGEILN.

It belongs to the gamma-glutamyl phosphate reductase family.

The protein localises to the cytoplasm. It carries out the reaction L-glutamate 5-semialdehyde + phosphate + NADP(+) = L-glutamyl 5-phosphate + NADPH + H(+). Its pathway is amino-acid biosynthesis; L-proline biosynthesis; L-glutamate 5-semialdehyde from L-glutamate: step 2/2. Catalyzes the NADPH-dependent reduction of L-glutamate 5-phosphate into L-glutamate 5-semialdehyde and phosphate. The product spontaneously undergoes cyclization to form 1-pyrroline-5-carboxylate. The polypeptide is Gamma-glutamyl phosphate reductase (Teredinibacter turnerae (strain ATCC 39867 / T7901)).